Here is a 147-residue protein sequence, read N- to C-terminus: Hemoglobin subunit epsilon (147 aa).

Positions 3 to 147 (HFTAEEKAAI…VAIALGHKYH (145 aa)) constitute a Globin domain. 2 positions are modified to phosphoserine: Ser-14 and Ser-51. Heme b is bound by residues His-64 and His-93.

This sequence belongs to the globin family. As to quaternary structure, heterotetramer of two alpha chains and two epsilon chains in early embryonic hemoglobin Gower-2; two zeta chains and two epsilon chains in early embryonic hemoglobin Gower-1. As to expression, red blood cells.

In terms of biological role, the epsilon chain is a beta-type chain of early mammalian embryonic hemoglobin. This Lagothrix lagotricha (Brown woolly monkey) protein is Hemoglobin subunit epsilon (HBE1).